Reading from the N-terminus, the 181-residue chain is Alkyl hydroperoxide reductase AhpD (181 aa).

The active-site Proton donor is Cys-131. The cysteines at positions 131 and 134 are disulfide-linked. Cys-134 (cysteine sulfenic acid (-SOH) intermediate) is an active-site residue.

It belongs to the AhpD family.

The enzyme catalyses N(6)-[(R)-dihydrolipoyl]-L-lysyl-[lipoyl-carrier protein] + a hydroperoxide = N(6)-[(R)-lipoyl]-L-lysyl-[lipoyl-carrier protein] + an alcohol + H2O. Functionally, antioxidant protein with alkyl hydroperoxidase activity. Required for the reduction of the AhpC active site cysteine residues and for the regeneration of the AhpC enzyme activity. In Bradyrhizobium sp. (strain BTAi1 / ATCC BAA-1182), this protein is Alkyl hydroperoxide reductase AhpD.